A 380-amino-acid chain; its full sequence is Cytochrome b (380 aa).

Helical transmembrane passes span 33–53 (FGSL…FLAM), 77–98 (WMIR…FLHI), 113–133 (WNIG…GYVL), and 178–198 (FFTL…LHLL). 2 residues coordinate heme b: His-83 and His-97. The heme b site is built by His-182 and His-196. His-201 is an a ubiquinone binding site. Helical transmembrane passes span 226 to 246 (IKDI…TLLS), 288 to 308 (LGGV…PALH), 320 to 340 (LSQF…WIGG), and 347 to 367 (FITI…LLMP).

The protein belongs to the cytochrome b family. In terms of assembly, the cytochrome bc1 complex contains 11 subunits: 3 respiratory subunits (MT-CYB, CYC1 and UQCRFS1), 2 core proteins (UQCRC1 and UQCRC2) and 6 low-molecular weight proteins (UQCRH/QCR6, UQCRB/QCR7, UQCRQ/QCR8, UQCR10/QCR9, UQCR11/QCR10 and a cleavage product of UQCRFS1). This cytochrome bc1 complex then forms a dimer. Heme b serves as cofactor.

It is found in the mitochondrion inner membrane. Its function is as follows. Component of the ubiquinol-cytochrome c reductase complex (complex III or cytochrome b-c1 complex) that is part of the mitochondrial respiratory chain. The b-c1 complex mediates electron transfer from ubiquinol to cytochrome c. Contributes to the generation of a proton gradient across the mitochondrial membrane that is then used for ATP synthesis. The chain is Cytochrome b (MT-CYB) from Pongo pygmaeus (Bornean orangutan).